We begin with the raw amino-acid sequence, 182 residues long: Lipoprotein signal peptidase (182 aa).

Transmembrane regions (helical) follow at residues 15-35 (LYIG…FLVI), 44-64 (LEVL…FVFG), 65-85 (AFQD…VFLI), and 97-117 (PWGW…KFFV). Residues Asp-140 and Asp-162 contribute to the active site. The chain crosses the membrane as a helical span at residues 155–175 (WPAFNVADSCVTIGLTILIFT).

This sequence belongs to the peptidase A8 family.

Its subcellular location is the cell inner membrane. It catalyses the reaction Release of signal peptides from bacterial membrane prolipoproteins. Hydrolyzes -Xaa-Yaa-Zaa-|-(S,diacylglyceryl)Cys-, in which Xaa is hydrophobic (preferably Leu), and Yaa (Ala or Ser) and Zaa (Gly or Ala) have small, neutral side chains.. The protein operates within protein modification; lipoprotein biosynthesis (signal peptide cleavage). In terms of biological role, this protein specifically catalyzes the removal of signal peptides from prolipoproteins. This Leptospira borgpetersenii serovar Hardjo-bovis (strain L550) protein is Lipoprotein signal peptidase.